We begin with the raw amino-acid sequence, 383 residues long: Spermidine/putrescine import ATP-binding protein PotA (383 aa).

Residues 12-246 (IALRDISKVY…PSTPFVAGFI (235 aa)) form the ABC transporter domain. 48–55 (GPSGCGKT) lines the ATP pocket.

The protein belongs to the ABC transporter superfamily. Spermidine/putrescine importer (TC 3.A.1.11.1) family. As to quaternary structure, the complex is composed of two ATP-binding proteins (PotA), two transmembrane proteins (PotB and PotC) and a solute-binding protein (PotD).

The protein localises to the cell membrane. It carries out the reaction ATP + H2O + polyamine-[polyamine-binding protein]Side 1 = ADP + phosphate + polyamineSide 2 + [polyamine-binding protein]Side 1.. In terms of biological role, part of the ABC transporter complex PotABCD involved in spermidine/putrescine import. Responsible for energy coupling to the transport system. This is Spermidine/putrescine import ATP-binding protein PotA from Acidothermus cellulolyticus (strain ATCC 43068 / DSM 8971 / 11B).